Consider the following 727-residue polypeptide: AN1-type zinc finger protein 4 (727 aa).

The region spanning 28-103 (MELFIETLTG…LKLVLAMRGG (76 aa)) is the Ubiquitin-like domain. Disordered stretches follow at residues 187–217 (HRMSGGSMYNSDTDEDEETEPSSSGQQIIEN) and 238–264 (KKPKKAVKIKPHPPVAPRPSSGSTAPS). The span at 238–248 (KKPKKAVKIKP) shows a compositional bias: basic residues. The AN1-type zinc-finger motif lies at 661 to 708 (KKTTNHCFLCGKKTGLASSYECRCGNNFCASHRYAETHGCTYDYKSAG). Residues Cys667, Cys670, Cys682, Cys684, Cys689, His692, His698, and Cys700 each contribute to the Zn(2+) site.

The chain is AN1-type zinc finger protein 4 (ZFAND4) from Homo sapiens (Human).